A 407-amino-acid chain; its full sequence is Arylacetamide deacetylase-like 4 (407 aa).

Residues Met-1 to Pro-4 are Cytoplasmic-facing. Residues Trp-5–Phe-25 form a helical; Signal-anchor for type II membrane protein membrane-spanning segment. Residues Glu-26 to Ile-407 lie on the Lumenal side of the membrane. The short motif at His-119–Gly-121 is the Involved in the stabilization of the negatively charged intermediate by the formation of the oxyanion hole element. An N-linked (GlcNAc...) asparagine glycan is attached at Asn-168. The active site involves Ser-193. N-linked (GlcNAc...) asparagine glycosylation is present at Asn-269. Residues Asp-347 and His-377 contribute to the active site.

This sequence belongs to the 'GDXG' lipolytic enzyme family.

The protein localises to the membrane. This is Arylacetamide deacetylase-like 4 (AADACL4) from Homo sapiens (Human).